We begin with the raw amino-acid sequence, 599 residues long: Aspartate--tRNA(Asp/Asn) ligase (599 aa).

Glu173 is a binding site for L-aspartate. Residues 197–200 form an aspartate region; the sequence is QLFK. Arg219 contacts L-aspartate. Residues 219-221 and Gln228 contribute to the ATP site; that span reads RDE. His449 lines the L-aspartate pocket. Residue Glu482 participates in ATP binding. Arg489 provides a ligand contact to L-aspartate. Residue 534 to 537 coordinates ATP; it reads GLDR.

This sequence belongs to the class-II aminoacyl-tRNA synthetase family. Type 1 subfamily. In terms of assembly, homodimer.

It is found in the cytoplasm. The enzyme catalyses tRNA(Asx) + L-aspartate + ATP = L-aspartyl-tRNA(Asx) + AMP + diphosphate. In terms of biological role, aspartyl-tRNA synthetase with relaxed tRNA specificity since it is able to aspartylate not only its cognate tRNA(Asp) but also tRNA(Asn). Reaction proceeds in two steps: L-aspartate is first activated by ATP to form Asp-AMP and then transferred to the acceptor end of tRNA(Asp/Asn). This Marinobacter nauticus (strain ATCC 700491 / DSM 11845 / VT8) (Marinobacter aquaeolei) protein is Aspartate--tRNA(Asp/Asn) ligase.